The chain runs to 338 residues: Tetraacyldisaccharide 4'-kinase (338 aa).

51-58 lines the ATP pocket; sequence HVGGAGKT.

The protein belongs to the LpxK family.

The catalysed reaction is a lipid A disaccharide + ATP = a lipid IVA + ADP + H(+). It functions in the pathway glycolipid biosynthesis; lipid IV(A) biosynthesis; lipid IV(A) from (3R)-3-hydroxytetradecanoyl-[acyl-carrier-protein] and UDP-N-acetyl-alpha-D-glucosamine: step 6/6. In terms of biological role, transfers the gamma-phosphate of ATP to the 4'-position of a tetraacyldisaccharide 1-phosphate intermediate (termed DS-1-P) to form tetraacyldisaccharide 1,4'-bis-phosphate (lipid IVA). The protein is Tetraacyldisaccharide 4'-kinase of Bradyrhizobium diazoefficiens (strain JCM 10833 / BCRC 13528 / IAM 13628 / NBRC 14792 / USDA 110).